We begin with the raw amino-acid sequence, 366 residues long: ACP-SH:acetate ligase (366 aa).

It localises to the cytoplasm. It carries out the reaction holo-[ACP] + acetate + ATP = acetyl-[ACP] + AMP + diphosphate. Its function is as follows. Acyl-carrier protein (ACP) acetate ligase of the biotin-dependent malonate decarboxylase multienzyme complex (EC 7.2.4.4). Involved in the conversion of the thiol group of the ACP-bound 2'-(5-phosphoribosyl)-3'-dephospho-CoA prosthetic group into its acetyl thioester using the energy from the hydrolysis of ATP. This is ACP-SH:acetate ligase (madH) from Malonomonas rubra.